The following is a 352-amino-acid chain: 4-hydroxybenzaldehyde synthase, chloroplastic (352 aa).

N-linked (GlcNAc...) asparagine glycosylation occurs at Asn122. 2 disulfide bridges follow: Cys159–Cys199 and Cys190–Cys231. N-linked (GlcNAc...) asparagine glycosylation is present at Asn247. Cys289 and Cys339 are disulfide-bonded. Active-site residues include His298 and Asn318.

This sequence belongs to the peptidase C1 family. Forms homodimers, homotrimers and homotetramers. Mainly expressed in pods, but also present in stems, roots, leaves and embryos (at protein level).

It is found in the plastid. The protein localises to the chloroplast. The catalysed reaction is (E)-4-coumarate + H2O = 4-hydroxybenzaldehyde + acetate. Its pathway is aromatic compound metabolism; phenylpropanoid biosynthesis. With respect to regulation, inhibited by ascorbate. Involved in the biosynthesis of vanillin (4-hydroxy-3-methoxy-benzaldehyde) and derivative natural products, key components of vanilla pods flavor. Catalyzes the conversion of (E)-4-coumarate to 4-hydroxybenzaldehyde, a vanillin precursor. Mediates the conversion of ferulic acid to 3-methoxy-4-hydroxybenzaldehyde with a very low efficiency. Cannot use cinnamic, caffeic, sinapic and o-coumaric acids as substrates. This Vanilla planifolia (Vanilla) protein is 4-hydroxybenzaldehyde synthase, chloroplastic.